The chain runs to 269 residues: UPF0739 protein C1orf74 (269 aa).

Belongs to the UPF0739 family.

The chain is UPF0739 protein C1orf74 (C1orf74) from Homo sapiens (Human).